A 498-amino-acid chain; its full sequence is ATP synthase subunit beta, chloroplastic (498 aa).

172-179 (GGAGVGKT) provides a ligand contact to ATP.

The protein belongs to the ATPase alpha/beta chains family. F-type ATPases have 2 components, CF(1) - the catalytic core - and CF(0) - the membrane proton channel. CF(1) has five subunits: alpha(3), beta(3), gamma(1), delta(1), epsilon(1). CF(0) has four main subunits: a(1), b(1), b'(1) and c(9-12).

It is found in the plastid. The protein localises to the chloroplast thylakoid membrane. It catalyses the reaction ATP + H2O + 4 H(+)(in) = ADP + phosphate + 5 H(+)(out). Produces ATP from ADP in the presence of a proton gradient across the membrane. The catalytic sites are hosted primarily by the beta subunits. The chain is ATP synthase subunit beta, chloroplastic from Phaseolus vulgaris (Kidney bean).